Here is an 855-residue protein sequence, read N- to C-terminus: Alanine--tRNA ligase (855 aa).

Zn(2+)-binding residues include H555, H559, C657, and H661.

It belongs to the class-II aminoacyl-tRNA synthetase family. Zn(2+) is required as a cofactor.

The protein resides in the cytoplasm. The catalysed reaction is tRNA(Ala) + L-alanine + ATP = L-alanyl-tRNA(Ala) + AMP + diphosphate. Its function is as follows. Catalyzes the attachment of alanine to tRNA(Ala) in a two-step reaction: alanine is first activated by ATP to form Ala-AMP and then transferred to the acceptor end of tRNA(Ala). Also edits incorrectly charged Ser-tRNA(Ala) and Gly-tRNA(Ala) via its editing domain. The chain is Alanine--tRNA ligase from Wolinella succinogenes (strain ATCC 29543 / DSM 1740 / CCUG 13145 / JCM 31913 / LMG 7466 / NCTC 11488 / FDC 602W) (Vibrio succinogenes).